A 379-amino-acid chain; its full sequence is RIB43A-like with coiled-coils protein 1 (379 aa).

Coiled coils occupy residues 43 to 111 and 285 to 337; these read EALN…RCEL and IRKV…EFRR.

The protein belongs to the RIB43A family. In terms of assembly, microtubule inner protein component of sperm flagellar doublet microtubules.

It localises to the cytoplasm. It is found in the cytoskeleton. Its subcellular location is the flagellum axoneme. The protein is RIB43A-like with coiled-coils protein 1 (RIBC1) of Bos taurus (Bovine).